We begin with the raw amino-acid sequence, 33 residues long: Photosystem II reaction center protein Psb30 (33 aa).

A helical membrane pass occupies residues 5–25 (IVFQLTALLFVVAAGPLVIVL).

It belongs to the Psb30/Ycf12 family. In terms of assembly, PSII is composed of 1 copy each of membrane proteins PsbA, PsbB, PsbC, PsbD, PsbE, PsbF, PsbH, PsbI, PsbJ, PsbK, PsbL, PsbM, PsbT, PsbX, PsbY, PsbZ, Psb30/Ycf12, peripheral proteins of the oxygen-evolving complex and a large number of cofactors. It forms dimeric complexes.

It localises to the plastid. Its subcellular location is the chloroplast thylakoid membrane. A core subunit of photosystem II (PSII), probably helps stabilize the reaction center. This is Photosystem II reaction center protein Psb30 from Chlorella vulgaris (Green alga).